The sequence spans 207 residues: Ribosomal RNA small subunit methyltransferase G (207 aa).

S-adenosyl-L-methionine-binding positions include glycine 73, leucine 78, valine 124–glutamate 125, and arginine 139.

The protein belongs to the methyltransferase superfamily. RNA methyltransferase RsmG family.

The protein localises to the cytoplasm. It carries out the reaction guanosine(527) in 16S rRNA + S-adenosyl-L-methionine = N(7)-methylguanosine(527) in 16S rRNA + S-adenosyl-L-homocysteine. In terms of biological role, specifically methylates the N7 position of guanine in position 527 of 16S rRNA. The protein is Ribosomal RNA small subunit methyltransferase G of Escherichia fergusonii (strain ATCC 35469 / DSM 13698 / CCUG 18766 / IAM 14443 / JCM 21226 / LMG 7866 / NBRC 102419 / NCTC 12128 / CDC 0568-73).